A 586-amino-acid chain; its full sequence is Arrestin-related trafficking adapter 5 (586 aa).

Disordered stretches follow at residues glycine 123–threonine 145 and glutamate 182–arginine 217. Residues alanine 126–threonine 145 show a composition bias toward polar residues. Low complexity predominate over residues serine 199–asparagine 216. Residue lysine 364 forms a Glycyl lysine isopeptide (Lys-Gly) (interchain with G-Cter in ubiquitin) linkage.

Belongs to the arrestin family. As to quaternary structure, interacts with RSP5. Ubiquitinated by RSP5.

Functionally, may regulate endocytosis by recruiting RSP5 ubiquitin ligase activity to specific plasma membrane proteins in response to extracellular stimuli. This is Arrestin-related trafficking adapter 5 (ART5) from Saccharomyces cerevisiae (strain ATCC 204508 / S288c) (Baker's yeast).